The sequence spans 421 residues: Serine hydroxymethyltransferase (421 aa).

Residues L121 and 125–127 (GHL) each bind (6S)-5,6,7,8-tetrahydrofolate. K229 carries the N6-(pyridoxal phosphate)lysine modification.

It belongs to the SHMT family. Homodimer. The cofactor is pyridoxal 5'-phosphate.

It is found in the cytoplasm. It carries out the reaction (6R)-5,10-methylene-5,6,7,8-tetrahydrofolate + glycine + H2O = (6S)-5,6,7,8-tetrahydrofolate + L-serine. It participates in one-carbon metabolism; tetrahydrofolate interconversion. Its pathway is amino-acid biosynthesis; glycine biosynthesis; glycine from L-serine: step 1/1. Catalyzes the reversible interconversion of serine and glycine with tetrahydrofolate (THF) serving as the one-carbon carrier. This reaction serves as the major source of one-carbon groups required for the biosynthesis of purines, thymidylate, methionine, and other important biomolecules. Also exhibits THF-independent aldolase activity toward beta-hydroxyamino acids, producing glycine and aldehydes, via a retro-aldol mechanism. This chain is Serine hydroxymethyltransferase, found in Actinobacillus pleuropneumoniae serotype 5b (strain L20).